The chain runs to 745 residues: Inhibitor of nuclear factor kappa-B kinase subunit alpha (745 aa).

A Protein kinase domain is found at 15-302 (WEMRERLGTG…LTLKQPRCFV (288 aa)). ATP is bound by residues 21 to 29 (LGTGGFGNV) and Lys-44. Thr-23 is modified (phosphothreonine; by PKB/AKT1 and SGK1). Asp-144 serves as the catalytic Proton acceptor. At Ser-176 the chain carries Phosphoserine; by MAP3K14. (Microbial infection) O-acetylthreonine; by Yersinia YopJ is present on Thr-179. Ser-180 is modified (phosphoserine; by SGK1). The interval 455–476 (LLRYNANLTKMKNTLISASQQL) is leucine-zipper. An NEMO-binding region spans residues 738–743 (LDWSWL).

This sequence belongs to the protein kinase superfamily. Ser/Thr protein kinase family. I-kappa-B kinase subfamily. As to quaternary structure, component of the I-kappa-B-kinase (IKK) core complex consisting of CHUK, IKBKB and IKBKG; probably four alpha/CHUK-beta/IKBKB dimers are associated with four gamma/IKBKG subunits. The IKK core complex seems to associate with regulatory or adapter proteins to form a IKK-signalosome holo-complex. The IKK complex associates with TERF2IP/RAP1, leading to promote IKK-mediated phosphorylation of RELA/p65. Part of a complex composed of NCOA2, NCOA3, CHUK/IKKA, IKBKB, IKBKG and CREBBP. Part of a 70-90 kDa complex at least consisting of CHUK/IKKA, IKBKB, NFKBIA, RELA, ELP1 and MAP3K14. Directly interacts with TRPC4AP. May interact with TRAF2. Interacts with NALP2. May interact with MAVS/IPS1. Interacts with ARRB1 and ARRB2. Interacts with NLRC5; prevents CHUK phosphorylation and kinase activity. Interacts with PIAS1; this interaction induces PIAS1 phosphorylation. Interacts with ZNF268 isoform 2; the interaction is further increased in a TNF-alpha-dependent manner. Interacts with FOXO3. Interacts with IFIT5; the interaction synergizes the recruitment of IKK to MAP3K7 and enhances IKK phosphorylation. Interacts with LRRC14. Interacts with SASH1. Directly interacts with DDX3X after the physiological activation of the TLR7 and TLR8 pathways; this interaction enhances CHUK autophosphorylation. (Microbial infection) Interacts with InlC of Listeria monocytogenes. Phosphorylated by MAP3K14/NIK, AKT and to a lesser extent by MEKK1, and dephosphorylated by PP2A. Autophosphorylated. In terms of processing, ubiquitinated by TRIM56 via 'Lys-63'-linked ubiquitination, promoting activation of CHUK/IKKA. Post-translationally, (Microbial infection) Acetylation of Thr-179 by Yersinia YopJ prevents phosphorylation and activation, thus blocking the I-kappa-B signaling pathway. In terms of tissue distribution, widely expressed.

The protein localises to the cytoplasm. It localises to the nucleus. It carries out the reaction L-seryl-[I-kappa-B protein] + ATP = O-phospho-L-seryl-[I-kappa-B protein] + ADP + H(+). With respect to regulation, activated when phosphorylated and inactivated when dephosphorylated. In terms of biological role, serine kinase that plays an essential role in the NF-kappa-B signaling pathway which is activated by multiple stimuli such as inflammatory cytokines, bacterial or viral products, DNA damages or other cellular stresses. Acts as a part of the canonical IKK complex in the conventional pathway of NF-kappa-B activation and phosphorylates inhibitors of NF-kappa-B on serine residues. These modifications allow polyubiquitination of the inhibitors and subsequent degradation by the proteasome. In turn, free NF-kappa-B is translocated into the nucleus and activates the transcription of hundreds of genes involved in immune response, growth control, or protection against apoptosis. Negatively regulates the pathway by phosphorylating the scaffold protein TAXBP1 and thus promoting the assembly of the A20/TNFAIP3 ubiquitin-editing complex (composed of A20/TNFAIP3, TAX1BP1, and the E3 ligases ITCH and RNF11). Therefore, CHUK plays a key role in the negative feedback of NF-kappa-B canonical signaling to limit inflammatory gene activation. As part of the non-canonical pathway of NF-kappa-B activation, the MAP3K14-activated CHUK/IKKA homodimer phosphorylates NFKB2/p100 associated with RelB, inducing its proteolytic processing to NFKB2/p52 and the formation of NF-kappa-B RelB-p52 complexes. In turn, these complexes regulate genes encoding molecules involved in B-cell survival and lymphoid organogenesis. Also participates in the negative feedback of the non-canonical NF-kappa-B signaling pathway by phosphorylating and destabilizing MAP3K14/NIK. Within the nucleus, phosphorylates CREBBP and consequently increases both its transcriptional and histone acetyltransferase activities. Modulates chromatin accessibility at NF-kappa-B-responsive promoters by phosphorylating histones H3 at 'Ser-10' that are subsequently acetylated at 'Lys-14' by CREBBP. Additionally, phosphorylates the CREBBP-interacting protein NCOA3. Also phosphorylates FOXO3 and may regulate this pro-apoptotic transcription factor. Phosphorylates RIPK1 at 'Ser-25' which represses its kinase activity and consequently prevents TNF-mediated RIPK1-dependent cell death. Phosphorylates AMBRA1 following mitophagy induction, promoting AMBRA1 interaction with ATG8 family proteins and its mitophagic activity. The protein is Inhibitor of nuclear factor kappa-B kinase subunit alpha (CHUK) of Homo sapiens (Human).